Consider the following 461-residue polypeptide: Protein naked cuticle homolog 2 (461 aa).

The disordered stretch occupies residues 1-106 (MGKFQSKHAA…DGEKAASREG (106 aa)). G2 carries the N-myristoyl glycine lipid modification. 2 stretches are compositionally biased toward basic and acidic residues: residues 34 to 73 (RGAE…DKGS) and 97 to 106 (DGEKAASREG). Residues 121 to 186 (QCDVSVEEDN…LRVKLTVSPE (66 aa)) form an interaction with DVL1, DVL2 and DVL3 region. One can recognise an EF-hand domain in the interval 127–162 (EEDNRQEWTFTLYDFDNSGKVTREDMSSLMHTIYEV). Ca(2+)-binding residues include D140, D142, S144, K146, and D151. 5 disordered regions span residues 176–205 (TLRV…PTRG), 263–302 (YTSK…HAIH), 321–359 (TRAL…PGKA), 372–414 (SAQD…GQPT), and 441–461 (HEHH…FHPS). The span at 188 to 205 (SSKKECPLTGQDREPTRG) shows a compositional bias: basic and acidic residues. The segment at 307–396 (QVLAEHVIPA…PPQPYGHKRY (90 aa)) is interaction with TGFA. Over residues 341–350 (PKGPGKPLGT) the composition is skewed to low complexity. Over residues 380–390 (PQPPPQPPPQP) the composition is skewed to pro residues.

Belongs to the NKD family. In terms of assembly, interacts with RNF25, TGFA (via cytoplasmic domain), and PPP2R3A. Interacts with DVL1, DVL2 and DVL3. Ubiquitinated, leading to rapid proteasomal degradation. Interaction with TGFA interferes with RNF25 binding and protects against ubiquitination mediated by RNF25. In terms of tissue distribution, expressed in the cecum, colon, esophagus, ileum, jejunum, skin and stomach.

The protein localises to the cell membrane. It localises to the cytoplasm. Its subcellular location is the cytoplasmic vesicle. Its function is as follows. Cell autonomous antagonist of the canonical Wnt signaling pathway. May activate a second Wnt signaling pathway that controls planar cell polarity. Required for processing of TGFA and for targeting of TGFA to the basolateral membrane of polarized epithelial cells. The chain is Protein naked cuticle homolog 2 (Nkd2) from Mus musculus (Mouse).